The chain runs to 155 residues: Microsomal glutathione S-transferase 1 (155 aa).

The Lumenal segment spans residues 3 to 9 (DLTQVMD). A helical membrane pass occupies residues 10–33 (DEVFMAFASYATIILSKMMLMSTA). Topologically, residues 34 to 62 (TAFYRLTRKVFANPEDCVAFGKGENAKKY) are cytoplasmic. Arginine 38 provides a ligand contact to glutathione. An N6-acetyllysine mark is found at lysine 42, lysine 55, and lysine 60. The helical transmembrane segment at 63 to 96 (LRTDDRVERVRRAHLNDLENIIPFLGIGLLYSLS) threads the bilayer. The glutathione site is built by arginine 73, arginine 74, histidine 76, and glutamate 81. Residues 97–99 (GPD) lie on the Lumenal side of the membrane. A helical membrane pass occupies residues 100–123 (PSTAILHFRLFVGARIYHTIAYLT). Glutathione is bound at residue tyrosine 121. At 124 to 128 (PLPQP) the chain is on the cytoplasmic side. Residues 129-148 (NRALSFFVGYGVTLSMAYRL) traverse the membrane as a helical segment. The Lumenal portion of the chain corresponds to 149-155 (LKSKLYL).

This sequence belongs to the MAPEG family. As to quaternary structure, homotrimer; The trimer binds only one molecule of glutathione. In terms of tissue distribution, highly expressed in liver.

It localises to the endoplasmic reticulum membrane. The protein resides in the mitochondrion outer membrane. It catalyses the reaction RX + glutathione = an S-substituted glutathione + a halide anion + H(+). In terms of biological role, conjugation of reduced glutathione to a wide number of exogenous and endogenous hydrophobic electrophiles. In Homo sapiens (Human), this protein is Microsomal glutathione S-transferase 1 (MGST1).